A 253-amino-acid polypeptide reads, in one-letter code: 5'/3'-nucleotidase SurE (253 aa).

Positions 8, 9, 39, and 92 each coordinate a divalent metal cation.

Belongs to the SurE nucleotidase family. It depends on a divalent metal cation as a cofactor.

Its subcellular location is the cytoplasm. It catalyses the reaction a ribonucleoside 5'-phosphate + H2O = a ribonucleoside + phosphate. The catalysed reaction is a ribonucleoside 3'-phosphate + H2O = a ribonucleoside + phosphate. It carries out the reaction [phosphate](n) + H2O = [phosphate](n-1) + phosphate + H(+). Functionally, nucleotidase with a broad substrate specificity as it can dephosphorylate various ribo- and deoxyribonucleoside 5'-monophosphates and ribonucleoside 3'-monophosphates with highest affinity to 3'-AMP. Also hydrolyzes polyphosphate (exopolyphosphatase activity) with the preference for short-chain-length substrates (P20-25). Might be involved in the regulation of dNTP and NTP pools, and in the turnover of 3'-mononucleotides produced by numerous intracellular RNases (T1, T2, and F) during the degradation of various RNAs. The chain is 5'/3'-nucleotidase SurE from Salmonella typhimurium (strain LT2 / SGSC1412 / ATCC 700720).